Reading from the N-terminus, the 871-residue chain is Envelope glycoprotein gp160 (871 aa).

The first 21 residues, 1-21, serve as a signal peptide directing secretion; the sequence is MKNLIGITLILIITILGIGFS. The Extracellular portion of the chain corresponds to 22 to 684; the sequence is TYYTTVFYGV…DITQWLWYIK (663 aa). The cysteines at positions 43 and 63 are disulfide-linked. Residues Asn-77, Asn-124, Asn-127, Asn-142, Asn-153, Asn-157, Asn-185, Asn-194, Asn-229, Asn-238, Asn-259, Asn-273, Asn-285, Asn-289, Asn-297, Asn-329, Asn-345, Asn-352, Asn-384, Asn-387, Asn-395, Asn-398, Asn-438, Asn-451, and Asn-496 are each glycosylated (N-linked (GlcNAc...) asparagine; by host). Intrachain disulfides connect Cys-108-Cys-202, Cys-115-Cys-193, Cys-120-Cys-154, Cys-215-Cys-244, and Cys-225-Cys-236. Residues 120–153 form a V1 region; sequence CTMTNTTNKTLNSATTTLTPTVNLSSIPNYEVYN. Positions 154–193 are V2; sequence CSFNQTTEFRDKKKQIYSLFYREDIVKEDGNNNSYYLHNC. The interval 292–325 is V3; that stretch reads CERTGNNTRGQVQIGPGMTFYNIENVVGDTRKAY. Cys-292 and Cys-326 are disulfide-bonded. 2 cysteine pairs are disulfide-bonded: Cys-376/Cys-435 and Cys-383/Cys-408. Residues 383–408 are V4; that stretch reads CNLTNWTNTWTANRTNNTHGTLVAPC. The interval 451 to 458 is V5; the sequence is NNSYTPQF. The fusion peptide stretch occupies residues 502–522; that stretch reads RDVGIGLLFLGFLSAAGSTMG. The immunosuppression stretch occupies residues 567–583; the sequence is LQARMLAVEKYIRDQQL. N-linked (GlcNAc...) asparagine; by host glycans are attached at residues Asn-602, Asn-613, Asn-626, and Asn-638. The stretch at 645-668 forms a coiled coil; sequence SLLEKAQTQQEKNKQELLELDKWS. Positions 663 to 684 are MPER; binding to GalCer; sequence ELDKWSSLWDWFDITQWLWYIK. Residues 685–705 form a helical membrane-spanning segment; sequence IAIIIVAGLVGLRILMFIVNV. Residues 706–871 lie on the Cytoplasmic side of the membrane; it reads VKQVRQGYTP…IRQGLELALN (166 aa). Residues 713–716 carry the YXXL motif; contains endocytosis signal motif; the sequence is YTPL.

As to quaternary structure, the mature envelope protein (Env) consists of a homotrimer of non-covalently associated gp120-gp41 heterodimers. The resulting complex protrudes from the virus surface as a spike. Interacts with host CD4 and CCR5. Gp120 also interacts with the C-type lectins CD209/DC-SIGN and CLEC4M/DC-SIGNR (collectively referred to as DC-SIGN(R)). In terms of assembly, the mature envelope protein (Env) consists of a homotrimer of non-covalently associated gp120-gp41 heterodimers. The resulting complex protrudes from the virus surface as a spike. Specific enzymatic cleavages in vivo yield mature proteins. Envelope glycoproteins are synthesized as an inactive precursor that is heavily N-glycosylated and processed likely by host cell furin in the Golgi to yield the mature SU and TM proteins. The cleavage site between SU and TM requires the minimal sequence [KR]-X-[KR]-R.

The protein resides in the virion membrane. It is found in the host cell membrane. The protein localises to the host endosome membrane. Functionally, the surface protein gp120 (SU) attaches the virus to the host lymphoid cell by binding to the primary receptor CD4. This interaction induces a structural rearrangement creating a high affinity binding site for a chemokine coreceptor like CCR5. This peculiar 2 stage receptor-interaction strategy allows gp120 to maintain the highly conserved coreceptor-binding site in a cryptic conformation, protected from neutralizing antibodies. These changes are transmitted to the transmembrane protein gp41 and are thought to activate its fusogenic potential by unmasking its fusion peptide. Its function is as follows. Surface protein gp120 (SU) may target the virus to gut-associated lymphoid tissue (GALT) by binding host ITGA4/ITGB7 (alpha-4/beta-7 integrins), a complex that mediates T-cell migration to the GALT. Interaction between gp120 and ITGA4/ITGB7 would allow the virus to enter GALT early in the infection, infecting and killing most of GALT's resting CD4+ T-cells. This T-cell depletion is believed to be the major insult to the host immune system leading to AIDS. In terms of biological role, the surface protein gp120 is a ligand for CD209/DC-SIGN and CLEC4M/DC-SIGNR, which are respectively found on dendritic cells (DCs), and on endothelial cells of liver sinusoids and lymph node sinuses. These interactions allow capture of viral particles at mucosal surfaces by these cells and subsequent transmission to permissive cells. DCs are professional antigen presenting cells, critical for host immunity by inducing specific immune responses against a broad variety of pathogens. They act as sentinels in various tissues where they take up antigen, process it, and present it to T-cells following migration to lymphoid organs. SIV subverts the migration properties of dendritic cells to gain access to CD4+ T-cells in lymph nodes. Virus transmission to permissive T-cells occurs either in trans (without DCs infection, through viral capture and transmission), or in cis (following DCs productive infection, through the usual CD4-gp120 interaction), thereby inducing a robust infection. In trans infection, bound virions remain infectious over days and it is proposed that they are not degraded, but protected in non-lysosomal acidic organelles within the DCs close to the cell membrane thus contributing to the viral infectious potential during DCs' migration from the periphery to the lymphoid tissues. On arrival at lymphoid tissues, intact virions recycle back to DCs' cell surface allowing virus transmission to CD4+ T-cells. Virion capture also seems to lead to MHC-II-restricted viral antigen presentation, and probably to the activation of SIV-specific CD4+ cells. The transmembrane protein gp41 (TM) acts as a class I viral fusion protein. Under the current model, the protein has at least 3 conformational states: pre-fusion native state, pre-hairpin intermediate state, and post-fusion hairpin state. During fusion of viral and target intracellular membranes, the coiled coil regions (heptad repeats) assume a trimer-of-hairpins structure, positioning the fusion peptide in close proximity to the C-terminal region of the ectodomain. The formation of this structure appears to drive apposition and subsequent fusion of viral and target cell membranes. Complete fusion occurs in host cell endosomes. The virus undergoes clathrin-dependent internalization long before endosomal fusion, thus minimizing the surface exposure of conserved viral epitopes during fusion and reducing the efficacy of inhibitors targeting these epitopes. Membranes fusion leads to delivery of the nucleocapsid into the cytoplasm. Functionally, the envelope glycoprotein gp160 precursor down-modulates cell surface CD4 antigen by interacting with it in the endoplasmic reticulum and blocking its transport to the cell surface. Its function is as follows. The gp120-gp41 heterodimer allows rapid transcytosis of the virus through CD4 negative cells such as simple epithelial monolayers of the intestinal, rectal and endocervical epithelial barriers. Both gp120 and gp41 specifically recognize glycosphingolipids galactosyl-ceramide (GalCer) or 3' sulfo-galactosyl-ceramide (GalS) present in the lipid rafts structures of epithelial cells. Binding to these alternative receptors allows the rapid transcytosis of the virus through the epithelial cells. This transcytotic vesicle-mediated transport of virions from the apical side to the basolateral side of the epithelial cells does not involve infection of the cells themselves. The polypeptide is Envelope glycoprotein gp160 (Simian immunodeficiency virus (isolate TAN1) (SIV-cpz)).